Here is a 468-residue protein sequence, read N- to C-terminus: MSSGKIAQVIGPVVDVLFAAGEKLPEINNALVVYKNDERKTKIVLEVALELGDGMVRTIAMESTDGLTRGMEVLDTGRPISVPVGKETLGRVFNVLGDTIDLEAPFTEDAERQPIHKKAPTFDELSTSSEILETGIKVIDLLAPYLKGGKVGLFGGAGVGKTVLIQELIHNIAQEHGGISVFAGVGERTREGNDLYWEMKESGVIEKTAMVFGQMNEPPGARMRVALTGLTIAEYFRDVEGQDVLLFIDNIFRFTQAGSEVSALLGRMPSAVGYQPTLATEMGQLQERITSTKKGSVTSIQAIYVPADDYTDPAPATAFAHLDSTTNLERKLVQLGIYPAVDPLASSSRALAPEIVGEEHYAVAAEVKRVLQRYHELQDIIAILGMDELSDEEKTLVARARRIQFFLSQNFNVAEQFTGQPGSYVPVAETVRGFKEILDGKYDHLPEDAFRGVGSIEDVIAKAEKMGF.

Residue 155–162 (GGAGVGKT) coordinates ATP.

It belongs to the ATPase alpha/beta chains family. In terms of assembly, F-type ATPases have 2 components, CF(1) - the catalytic core - and CF(0) - the membrane proton channel. CF(1) has five subunits: alpha(3), beta(3), gamma(1), delta(1), epsilon(1). CF(0) has three main subunits: a(1), b(2) and c(9-12). The alpha and beta chains form an alternating ring which encloses part of the gamma chain. CF(1) is attached to CF(0) by a central stalk formed by the gamma and epsilon chains, while a peripheral stalk is formed by the delta and b chains.

The protein localises to the cell membrane. The catalysed reaction is ATP + H2O + 4 H(+)(in) = ADP + phosphate + 5 H(+)(out). Its function is as follows. Produces ATP from ADP in the presence of a proton gradient across the membrane. The catalytic sites are hosted primarily by the beta subunits. The protein is ATP synthase subunit beta of Streptococcus pneumoniae (strain ATCC BAA-255 / R6).